Consider the following 586-residue polypeptide: Regulatory protein NPR3 (586 aa).

Ser10 carries the post-translational modification Phosphoserine. The region spanning 60–135 is the BTB domain; that stretch reads SDAEIIVDGV…IYTGRLKPFP (76 aa). The C2HC NPR-type zinc-finger motif lies at 138–152; sequence VSTCVDPVCSHDCCR. Zn(2+) is bound by residues Cys141, Cys146, His148, and Cys151. ANK repeat units lie at residues 261-291, 293-320, and 324-353; these read ERIG…TLDQ, NGLH…DVNY, and RGYT…NASE. Residues 383 to 523 form a salicylic acid-binding core (SBC) region; that stretch reads ESSKARLCID…MAEYIDDDIL (141 aa). Arg428 provides a ligand contact to salicylate. Residues 554–586 are disordered; that stretch reads YSKDKESKIARSCLSASSSPSSSSIRDDLHNTT. Over residues 565-577 the composition is skewed to low complexity; that stretch reads SCLSASSSPSSSS.

This sequence belongs to the plant 'ANKYRIN-BTB/POZ' family. 'NPR1-like' subfamily. Forms homodimers and heterodimers with NPR4 in the presence of salicylic acid (SA). Interacts with TGA2, TGA3, TGA5 and TGA6. Interacts with CUL3A, a core component of the cullin-RING ubiquitin ligases (CRL). Interacts with TGA2 in vivo in the nucleus. Binds to NPR1; this interaction is promoted by association with SA, probably due to conformational changes.

It is found in the nucleus. It functions in the pathway protein modification; protein ubiquitination. In terms of biological role, salicylic acid (SA)-binding substrate-specific adapter of an E3 ubiquitin-protein ligase complex (CUL3-RBX1-BTB) which mediates the ubiquitination and subsequent proteasomal degradation of NPR1 in response to SA. Together with NPR4, acts as receptor of salicylic acid to monitor immunity in a NPR1-dependent manner and induce systemic acquired resistance (SAR). Involved in the regulation of basal defense responses against pathogens, and may be implicated in the cross-talk between the SA- and JA-dependent signaling pathways. The protein is Regulatory protein NPR3 of Arabidopsis thaliana (Mouse-ear cress).